The chain runs to 1897 residues: 1,3-beta-glucan synthase component FKS1 (1897 aa).

The disordered stretch occupies residues 1 to 106; sequence MSGYPAGHYE…SETFSDFTMR (106 aa). Residues 8-29 show a composition bias toward basic and acidic residues; that stretch reads HYEDGYGHQEHGGDAYYQDEHG. Residues 74–83 show a composition bias toward low complexity; the sequence is GDQYYDQGNG. A run of 17 helical transmembrane segments spans residues 487–507, 525–545, 564–584, 591–611, 655–675, 707–727, 728–748, 1329–1349, 1386–1406, 1473–1493, 1497–1517, 1588–1608, 1630–1650, 1666–1686, 1701–1721, 1766–1786, and 1826–1846; these read IWVI…PTLY, WSAV…ATLC, LMFL…VFGF, TICL…FFFF, LWIC…TLSL, ILLG…SYLW, YVIC…VSIW, NMFI…LGAL, CVVS…VQEL, FAGP…FATS, TPAL…PFLF, IFFS…VPYL, IAIV…MFFG, FGAV…LVIF, VLGM…IISL, FSAD…ALCI, and FAIL…APLV.

It belongs to the glycosyltransferase 48 family. As to quaternary structure, component of the 1,3-beta-glucan synthase (GS) complex composed of a catalytic subunit fksA and a regulatory subunit.

It is found in the mitochondrion. The protein localises to the cell membrane. The enzyme catalyses [(1-&gt;3)-beta-D-glucosyl](n) + UDP-alpha-D-glucose = [(1-&gt;3)-beta-D-glucosyl](n+1) + UDP + H(+). Its function is as follows. Catalytic subunit of the 1,3-beta-glucan synthase. Synthesizes 1,3-beta-glucan, a major structural component of the fungal cell wall. Involved in cell wall synthesis, maintenance and remodeling. The polypeptide is 1,3-beta-glucan synthase component FKS1 (Aspergillus niger (strain ATCC MYA-4892 / CBS 513.88 / FGSC A1513)).